Here is a 469-residue protein sequence, read N- to C-terminus: MNPNQKIITIGSICMVVGIISLILQIGNIVSIWISHSIQTGNQNHTGTCNQSIITYKNSTWVNQTYVNISNTNVVAGKDTTSVILAGNSSLCPIRGWAIYSKDNGVRIGSKGDVFVIREPFISCSHLECRTFFLTQGALLNDKHSNGTVKDRSPYRALMSCPVGEAPSPYNSRFESVAWSASACHDGMGWLTIGISGPDDGAVAVLKYNGIITETIKSWRKEILRTQESECVCVNGSCFTIMTDGPSGGPASYKIFKIEKGKVTKSIELDAPNSHYEECSCYPDTSKVMCVCRDNWHGSNRPWVSFDQNLDYQMGYICSGVFGDNPRPKDGKGSCGPVYVDGANGVKGFSYRYGNGVWIGRTKSNSSRQGFEMIWDPNGWTETDSNFFMKQDVVAVTDWSGYSGSFVQHPELTGLDCMRPCFWVELIRGRPKENTIWTSGSSISFCGVNSDTVDWSWPDGAELPFTIDK.

At M1 to K6 the chain is on the intravirion side. Residues I7–G27 form a helical membrane-spanning segment. Residues G11 to W33 are involved in apical transport and lipid raft association. The Virion surface portion of the chain corresponds to N28 to K469. The interval H36–S90 is hypervariable stalk region. N-linked (GlcNAc...) asparagine; by host glycans are attached at residues N44, N50, N58, N63, N68, and N88. The tract at residues L91–K469 is head of neuraminidase. 8 disulfides stabilise this stretch: C92–C417, C124–C129, C184–C231, C233–C238, C279–C292, C281–C290, C318–C335, and C421–C446. R118 is a binding site for substrate. An N-linked (GlcNAc...) asparagine; by host glycan is attached at N146. The active-site Proton donor/acceptor is D151. Substrate is bound at residue R152. An N-linked (GlcNAc...) asparagine; by host glycan is attached at N235. E277–E278 serves as a coordination point for substrate. R293 is a binding site for substrate. Ca(2+)-binding residues include D294, G298, D324, and N344. N365 carries an N-linked (GlcNAc...) asparagine; by host glycan. A substrate-binding site is contributed by R368. Y402 (nucleophile) is an active-site residue.

Belongs to the glycosyl hydrolase 34 family. As to quaternary structure, homotetramer. The cofactor is Ca(2+). Post-translationally, N-glycosylated.

The protein resides in the virion membrane. The protein localises to the host apical cell membrane. It carries out the reaction Hydrolysis of alpha-(2-&gt;3)-, alpha-(2-&gt;6)-, alpha-(2-&gt;8)- glycosidic linkages of terminal sialic acid residues in oligosaccharides, glycoproteins, glycolipids, colominic acid and synthetic substrates.. With respect to regulation, inhibited by the neuraminidase inhibitors zanamivir (Relenza) and oseltamivir (Tamiflu). These drugs interfere with the release of progeny virus from infected cells and are effective against all influenza strains. Resistance to neuraminidase inhibitors is quite rare. Functionally, catalyzes the removal of terminal sialic acid residues from viral and cellular glycoconjugates. Cleaves off the terminal sialic acids on the glycosylated HA during virus budding to facilitate virus release. Additionally helps virus spread through the circulation by further removing sialic acids from the cell surface. These cleavages prevent self-aggregation and ensure the efficient spread of the progeny virus from cell to cell. Otherwise, infection would be limited to one round of replication. Described as a receptor-destroying enzyme because it cleaves a terminal sialic acid from the cellular receptors. May facilitate viral invasion of the upper airways by cleaving the sialic acid moieties on the mucin of the airway epithelial cells. Likely to plays a role in the budding process through its association with lipid rafts during intracellular transport. May additionally display a raft-association independent effect on budding. Plays a role in the determination of host range restriction on replication and virulence. Sialidase activity in late endosome/lysosome traffic seems to enhance virus replication. This chain is Neuraminidase, found in Aves (Human).